Here is a 102-residue protein sequence, read N- to C-terminus: Citrate lyase acyl carrier protein (102 aa).

The residue at position 14 (S14) is an O-(phosphoribosyl dephospho-coenzyme A)serine.

It belongs to the CitD family. In terms of assembly, oligomer with a subunit composition of (alpha,beta,gamma)6.

The protein resides in the cytoplasm. Its function is as follows. Covalent carrier of the coenzyme of citrate lyase. This Streptococcus mutans serotype c (strain ATCC 700610 / UA159) protein is Citrate lyase acyl carrier protein.